A 373-amino-acid chain; its full sequence is MLIWLAELSDHIHFFSTHFRFLNLFRYITFRTGGALFTSALIVFLFGPRIISSLRVRQGRGQPIRADGPQTHFKKAGTPTMGGLMILAGIVVSSLLWADLANVYVVATLLVTLGFGAIGFYDDYLKVTKQSDKGFSGRARLGLEFIIAAIAVYFMMNTALSSGPAGSTFGSSIAFPFFKSFMLNLGMFFVLFGAFVIVSAGNAVNLTDGLDGLAIVPVMIAAASFGVIAYLAGNFVFADYLAINFVPGTGELAVVLGAVIGAGLGFLWFNAPPAAIFMGDTGSLALGGLIGTVAVATKHEIVMAIIGGLFVLEALSVIIQVGFFKMTRRRVFLMAPIHHHFEKKGWTESQVVVRFWIVAVILAMIGLSTLKLR.

10 consecutive transmembrane segments (helical) span residues 34–54 (GALFTSALIVFLFGPRIISSL), 78–98 (TPTMGGLMILAGIVVSSLLWA), 100–120 (LANVYVVATLLVTLGFGAIGF), 141–161 (LGLEFIIAAIAVYFMMNTALS), 181–201 (FMLNLGMFFVLFGAFVIVSAG), 212–232 (GLAIVPVMIAAASFGVIAYLA), 252–272 (LAVVLGAVIGAGLGFLWFNAP), 275–295 (AIFMGDTGSLALGGLIGTVAV), 301–321 (IVMAIIGGLFVLEALSVIIQV), and 350–370 (QVVVRFWIVAVILAMIGLSTL).

This sequence belongs to the glycosyltransferase 4 family. MraY subfamily. Mg(2+) is required as a cofactor.

The protein localises to the cell inner membrane. It catalyses the reaction UDP-N-acetyl-alpha-D-muramoyl-L-alanyl-gamma-D-glutamyl-meso-2,6-diaminopimeloyl-D-alanyl-D-alanine + di-trans,octa-cis-undecaprenyl phosphate = di-trans,octa-cis-undecaprenyl diphospho-N-acetyl-alpha-D-muramoyl-L-alanyl-D-glutamyl-meso-2,6-diaminopimeloyl-D-alanyl-D-alanine + UMP. The protein operates within cell wall biogenesis; peptidoglycan biosynthesis. In terms of biological role, catalyzes the initial step of the lipid cycle reactions in the biosynthesis of the cell wall peptidoglycan: transfers peptidoglycan precursor phospho-MurNAc-pentapeptide from UDP-MurNAc-pentapeptide onto the lipid carrier undecaprenyl phosphate, yielding undecaprenyl-pyrophosphoryl-MurNAc-pentapeptide, known as lipid I. This Rhizobium rhizogenes (strain K84 / ATCC BAA-868) (Agrobacterium radiobacter) protein is Phospho-N-acetylmuramoyl-pentapeptide-transferase.